A 715-amino-acid chain; its full sequence is Fatty acid oxidation complex subunit alpha (715 aa).

The interval 1–190 (MTTTSAFMLN…KAGLVDDVVP (190 aa)) is enoyl-CoA hydratase. Residues 306 to 715 (GPLNSVGILG…WTNGETDQGN (410 aa)) form a 3-hydroxyacyl-CoA dehydrogenase region.

The protein in the N-terminal section; belongs to the enoyl-CoA hydratase/isomerase family. This sequence in the central section; belongs to the 3-hydroxyacyl-CoA dehydrogenase family. As to quaternary structure, heterotetramer of two alpha chains (FadJ) and two beta chains (FadI).

The protein localises to the cytoplasm. It carries out the reaction a (3S)-3-hydroxyacyl-CoA = a (2E)-enoyl-CoA + H2O. The catalysed reaction is a 4-saturated-(3S)-3-hydroxyacyl-CoA = a (3E)-enoyl-CoA + H2O. It catalyses the reaction a (3S)-3-hydroxyacyl-CoA + NAD(+) = a 3-oxoacyl-CoA + NADH + H(+). The enzyme catalyses (3S)-3-hydroxybutanoyl-CoA = (3R)-3-hydroxybutanoyl-CoA. It participates in lipid metabolism; fatty acid beta-oxidation. Functionally, catalyzes the formation of a hydroxyacyl-CoA by addition of water on enoyl-CoA. Also exhibits 3-hydroxyacyl-CoA epimerase and 3-hydroxyacyl-CoA dehydrogenase activities. The polypeptide is Fatty acid oxidation complex subunit alpha (Salmonella dublin (strain CT_02021853)).